Here is a 176-residue protein sequence, read N- to C-terminus: MDAENDSPLPKPQWIYRVGIGQDSHRFLSESSAKPCILAGVIFENSPGFQANSDGDIVFHAICNAISSVTHRIILGEVADELFHTRGITDSSVYLSEAIKSLKSNQMISHVAITIEGNRPKFLPKLSAMRQSIASALNIPLGSVGITATSGEGLSDFGCGDGVQCFCVLTVAEYCN.

3 residues coordinate a divalent metal cation: Asp-23, His-25, and His-60. Asp-23–His-25 is a 4-CDP-2-C-methyl-D-erythritol 2-phosphate binding site. Residue Thr-149 to Glu-152 participates in 4-CDP-2-C-methyl-D-erythritol 2-phosphate binding.

This sequence belongs to the IspF family. As to quaternary structure, homotrimer. The cofactor is a divalent metal cation.

It carries out the reaction 4-CDP-2-C-methyl-D-erythritol 2-phosphate = 2-C-methyl-D-erythritol 2,4-cyclic diphosphate + CMP. Its pathway is isoprenoid biosynthesis; isopentenyl diphosphate biosynthesis via DXP pathway; isopentenyl diphosphate from 1-deoxy-D-xylulose 5-phosphate: step 4/6. Its function is as follows. Involved in the biosynthesis of isopentenyl diphosphate (IPP) and dimethylallyl diphosphate (DMAPP), two major building blocks of isoprenoid compounds. Catalyzes the conversion of 4-diphosphocytidyl-2-C-methyl-D-erythritol 2-phosphate (CDP-ME2P) to 2-C-methyl-D-erythritol 2,4-cyclodiphosphate (ME-CPP) with a corresponding release of cytidine 5-monophosphate (CMP). The protein is 2-C-methyl-D-erythritol 2,4-cyclodiphosphate synthase of Chlamydia caviae (strain ATCC VR-813 / DSM 19441 / 03DC25 / GPIC) (Chlamydophila caviae).